A 257-amino-acid polypeptide reads, in one-letter code: Short-chain dehydrogenase reductase 3b (257 aa).

12–36 (IITGGASGIGAESVRLFTEHGARVV) provides a ligand contact to NAD(+). Ser-144 is a substrate binding site. Residue Tyr-157 is the Proton acceptor of the active site.

The protein belongs to the short-chain dehydrogenases/reductases (SDR) family.

The chain is Short-chain dehydrogenase reductase 3b (SDR3b) from Arabidopsis thaliana (Mouse-ear cress).